The primary structure comprises 449 residues: 3-phosphoshikimate 1-carboxyvinyltransferase (449 aa).

Positions 28, 29, and 33 each coordinate 3-phosphoshikimate. Lys28 provides a ligand contact to phosphoenolpyruvate. Phosphoenolpyruvate contacts are provided by Gly105 and Arg133. Residues Ser179, Gln181, Asp332, and Lys359 each coordinate 3-phosphoshikimate. Gln181 contacts phosphoenolpyruvate. The Proton acceptor role is filled by Asp332. Phosphoenolpyruvate contacts are provided by Arg363 and Arg406.

This sequence belongs to the EPSP synthase family. As to quaternary structure, monomer.

Its subcellular location is the cytoplasm. The enzyme catalyses 3-phosphoshikimate + phosphoenolpyruvate = 5-O-(1-carboxyvinyl)-3-phosphoshikimate + phosphate. The protein operates within metabolic intermediate biosynthesis; chorismate biosynthesis; chorismate from D-erythrose 4-phosphate and phosphoenolpyruvate: step 6/7. Catalyzes the transfer of the enolpyruvyl moiety of phosphoenolpyruvate (PEP) to the 5-hydroxyl of shikimate-3-phosphate (S3P) to produce enolpyruvyl shikimate-3-phosphate and inorganic phosphate. This Nitrobacter winogradskyi (strain ATCC 25391 / DSM 10237 / CIP 104748 / NCIMB 11846 / Nb-255) protein is 3-phosphoshikimate 1-carboxyvinyltransferase.